The chain runs to 370 residues: Uroporphyrinogen decarboxylase (370 aa).

Substrate-binding positions include 29-33 (RQAGR), Asp-79, Tyr-155, Ser-210, and His-342.

It belongs to the uroporphyrinogen decarboxylase family. As to quaternary structure, homodimer.

Its subcellular location is the cytoplasm. The enzyme catalyses uroporphyrinogen III + 4 H(+) = coproporphyrinogen III + 4 CO2. It functions in the pathway porphyrin-containing compound metabolism; protoporphyrin-IX biosynthesis; coproporphyrinogen-III from 5-aminolevulinate: step 4/4. Functionally, catalyzes the decarboxylation of four acetate groups of uroporphyrinogen-III to yield coproporphyrinogen-III. This Delftia acidovorans (strain DSM 14801 / SPH-1) protein is Uroporphyrinogen decarboxylase.